Consider the following 153-residue polypeptide: Nascent polypeptide-associated complex subunit beta (153 aa).

2 disordered regions span residues 1-40 and 126-153; these read MSDV…ADDK and LQKE…PKVE. Residues 23–32 are compositionally biased toward basic residues; the sequence is TPRRKVKRAP. The NAC-A/B domain maps to 36–101; that stretch reads GADDKKLQLA…GEDKELTELV (66 aa). Acidic residues predominate over residues 132 to 147; it reads EDDDEIPDLVEGENFE.

The protein belongs to the NAC-beta family. As to quaternary structure, part of the nascent polypeptide-associated complex (NAC), consisting of EGD2 and EGD1. NAC associates with ribosomes via EGD1.

The protein resides in the cytoplasm. Its subcellular location is the nucleus. Its function is as follows. Component of the nascent polypeptide-associated complex (NAC), a dynamic component of the ribosomal exit tunnel, protecting the emerging polypeptides from interaction with other cytoplasmic proteins to ensure appropriate nascent protein targeting. The NAC complex also promotes mitochondrial protein import by enhancing productive ribosome interactions with the outer mitochondrial membrane and blocks the inappropriate interaction of ribosomes translating non-secretory nascent polypeptides with translocation sites in the membrane of the endoplasmic reticulum. EGD1 may act as a transcription factor that exert a negative effect on the expression of several genes that are transcribed by RNA polymerase II. This chain is Nascent polypeptide-associated complex subunit beta (EGD1), found in Gibberella zeae (strain ATCC MYA-4620 / CBS 123657 / FGSC 9075 / NRRL 31084 / PH-1) (Wheat head blight fungus).